Consider the following 668-residue polypeptide: Probable metal-nicotianamine transporter YSL5 (668 aa).

Positions 1–11 (MPPPETSSAAA) are enriched in low complexity. The interval 1 to 22 (MPPPETSSAAAPSPPSPDPLPP) is disordered. The span at 12 to 22 (PSPPSPDPLPP) shows a compositional bias: pro residues. The next 14 helical transmembrane spans lie at 27-47 (LTLR…VVIH), 51-71 (LTVG…FFLA), 102-122 (CAIA…IFAM), 147-167 (LGWM…SIVM), 209-229 (LVKY…FSGV), 268-288 (IVNC…WPFI), 315-335 (IAIS…FLII), 383-403 (LAVS…PIIF), 410-430 (LVLV…YGMG), 443-463 (IALF…AGLA), 501-521 (IGVA…WTAF), 557-577 (LEIC…KDVV), 595-615 (FYIG…LFAW), and 633-653 (GLIC…ILGV).

The protein belongs to the YSL (TC 2.A.67.2) family. Expressed in roots.

The protein localises to the membrane. Functionally, may be involved in the transport of nicotianamine-chelated metals. In Oryza sativa subsp. japonica (Rice), this protein is Probable metal-nicotianamine transporter YSL5 (YSL5).